The primary structure comprises 684 residues: DNA-directed RNA polymerase subunit beta' (684 aa).

C69, C71, C87, and C90 together coordinate Zn(2+). Residues D491, D493, and D495 each contribute to the Mg(2+) site.

This sequence belongs to the RNA polymerase beta' chain family. RpoC1 subfamily. In terms of assembly, in plastids the minimal PEP RNA polymerase catalytic core is composed of four subunits: alpha, beta, beta', and beta''. When a (nuclear-encoded) sigma factor is associated with the core the holoenzyme is formed, which can initiate transcription. It depends on Mg(2+) as a cofactor. Requires Zn(2+) as cofactor.

The protein localises to the plastid. It is found in the chloroplast. It carries out the reaction RNA(n) + a ribonucleoside 5'-triphosphate = RNA(n+1) + diphosphate. DNA-dependent RNA polymerase catalyzes the transcription of DNA into RNA using the four ribonucleoside triphosphates as substrates. The sequence is that of DNA-directed RNA polymerase subunit beta' from Phaseolus vulgaris (Kidney bean).